The sequence spans 141 residues: Hemoglobin subunit alpha-D (141 aa).

A Globin domain is found at 1-141 (MLTEDDKQLI…VSAVLAEKYR (141 aa)). The heme b site is built by His-58 and His-87.

The protein belongs to the globin family. In terms of assembly, heterotetramer of two alpha-D chains and two beta chains. In terms of tissue distribution, red blood cells.

Its function is as follows. Involved in oxygen transport from the lung to the various peripheral tissues. This Chelonoidis niger (Galapagos giant tortoise) protein is Hemoglobin subunit alpha-D (HBAD).